Reading from the N-terminus, the 404-residue chain is Tryptophan synthase beta chain (404 aa).

Lysine 99 bears the N6-(pyridoxal phosphate)lysine mark.

Belongs to the TrpB family. Tetramer of two alpha and two beta chains. Requires pyridoxal 5'-phosphate as cofactor.

The enzyme catalyses (1S,2R)-1-C-(indol-3-yl)glycerol 3-phosphate + L-serine = D-glyceraldehyde 3-phosphate + L-tryptophan + H2O. It functions in the pathway amino-acid biosynthesis; L-tryptophan biosynthesis; L-tryptophan from chorismate: step 5/5. Functionally, the beta subunit is responsible for the synthesis of L-tryptophan from indole and L-serine. The polypeptide is Tryptophan synthase beta chain (Rhizobium rhizogenes (strain K84 / ATCC BAA-868) (Agrobacterium radiobacter)).